The following is a 129-amino-acid chain: Flagellar assembly factor FliW 2 (129 aa).

It belongs to the FliW family. Interacts with translational regulator CsrA and flagellin(s).

It is found in the cytoplasm. In terms of biological role, acts as an anti-CsrA protein, binds CsrA and prevents it from repressing translation of its target genes, one of which is flagellin. Binds to flagellin and participates in the assembly of the flagellum. The sequence is that of Flagellar assembly factor FliW 2 from Helicobacter pylori (strain HPAG1).